The sequence spans 161 residues: UPF0225 protein HI_0277 (161 aa).

The protein belongs to the UPF0225 family.

The chain is UPF0225 protein HI_0277 from Haemophilus influenzae (strain ATCC 51907 / DSM 11121 / KW20 / Rd).